The primary structure comprises 81 residues: uncharacterized protein (81 aa).

This is an uncharacterized protein from Schizosaccharomyces pombe (strain 972 / ATCC 24843) (Fission yeast).